Here is a 68-residue protein sequence, read N- to C-terminus: UPF0435 protein SA1696 (68 aa).

It belongs to the UPF0435 family.

The protein is UPF0435 protein SA1696 of Staphylococcus aureus (strain N315).